We begin with the raw amino-acid sequence, 1138 residues long: Ras guanine nucleotide exchange factor N (1138 aa).

LRR repeat units lie at residues 1–16, 18–39, and 43–64; these read MSYNSLTTIDIDITQL, HLKSVNLRSNKLGNSSGVSYFG, and TLQKLNLKENYLTELPSTFYLL. Disordered regions lie at residues 126-180, 239-301, 319-360, 389-411, 473-540, 601-643, and 660-680; these read ALKN…SNNN, FNSE…GSRK, NKTH…SDTN, IDSPRTLERRNSSRDDIPISPPQ, GSPT…NNNN, ATTV…TSGS, and MSDVFSGGNSQGGGSSLSQSG. Positions 140–158 are enriched in low complexity; sequence KTKGLHSSSSNINTSNNIT. The segment covering 263-275 has biased composition (polar residues); that stretch reads RAQTISGKQPSII. The segment covering 283–299 has biased composition (gly residues); that stretch reads SGGGSGNNNNSGGGGGS. Residues 326 to 352 are compositionally biased toward low complexity; the sequence is GHSSSSQSNSTTNTPSISSTPYPTSTI. Over residues 393 to 405 the composition is skewed to basic and acidic residues; it reads RTLERRNSSRDDI. Positions 487–496 are enriched in pro residues; it reads PQHPPPPPPI. Polar residues predominate over residues 498-511; sequence DNNQPKLNQSQNLI. Composition is skewed to low complexity over residues 512–540 and 605–634; these read NTNSNSVTTTNNSSQTTTTTTTTTTNNNN and NSNSSNNLMMSNSPLSSSSMNLLQQSNSPQ. The N-terminal Ras-GEF domain maps to 733-855; sequence GVPKVKNITL…LLLNIINMKR (123 aa). Positions 891–1118 constitute a Ras-GEF domain; that stretch reads RPHEIARQLT…YSEASKIEEK (228 aa).

Promotes the exchange of Ras-bound GDP by GTP. May play a role in chemotaxis. This Dictyostelium discoideum (Social amoeba) protein is Ras guanine nucleotide exchange factor N (gefN).